A 633-amino-acid polypeptide reads, in one-letter code: Threonine--tRNA ligase (633 aa).

A TGS domain is found at 1–61; that stretch reads MINIYFNNNL…TENCTFEVIT (61 aa). The segment at 242–533 is catalytic; the sequence is DHRKIGKELE…LIEHHSGKFP (292 aa). Residues cysteine 333, histidine 384, and histidine 510 each contribute to the Zn(2+) site.

It belongs to the class-II aminoacyl-tRNA synthetase family. In terms of assembly, homodimer. It depends on Zn(2+) as a cofactor.

It is found in the cytoplasm. The catalysed reaction is tRNA(Thr) + L-threonine + ATP = L-threonyl-tRNA(Thr) + AMP + diphosphate + H(+). In terms of biological role, catalyzes the attachment of threonine to tRNA(Thr) in a two-step reaction: L-threonine is first activated by ATP to form Thr-AMP and then transferred to the acceptor end of tRNA(Thr). Also edits incorrectly charged L-seryl-tRNA(Thr). The polypeptide is Threonine--tRNA ligase (Ehrlichia canis (strain Jake)).